We begin with the raw amino-acid sequence, 491 residues long: Aspartyl/glutamyl-tRNA(Asn/Gln) amidotransferase subunit B (491 aa).

This sequence belongs to the GatB/GatE family. GatB subfamily. In terms of assembly, heterotrimer of A, B and C subunits.

The enzyme catalyses L-glutamyl-tRNA(Gln) + L-glutamine + ATP + H2O = L-glutaminyl-tRNA(Gln) + L-glutamate + ADP + phosphate + H(+). It catalyses the reaction L-aspartyl-tRNA(Asn) + L-glutamine + ATP + H2O = L-asparaginyl-tRNA(Asn) + L-glutamate + ADP + phosphate + 2 H(+). In terms of biological role, allows the formation of correctly charged Asn-tRNA(Asn) or Gln-tRNA(Gln) through the transamidation of misacylated Asp-tRNA(Asn) or Glu-tRNA(Gln) in organisms which lack either or both of asparaginyl-tRNA or glutaminyl-tRNA synthetases. The reaction takes place in the presence of glutamine and ATP through an activated phospho-Asp-tRNA(Asn) or phospho-Glu-tRNA(Gln). In Paraburkholderia phymatum (strain DSM 17167 / CIP 108236 / LMG 21445 / STM815) (Burkholderia phymatum), this protein is Aspartyl/glutamyl-tRNA(Asn/Gln) amidotransferase subunit B.